Here is a 55-residue protein sequence, read N- to C-terminus: Ribosome biogenesis protein Nop10 (55 aa).

Belongs to the NOP10 family.

In terms of biological role, involved in ribosome biogenesis; more specifically in 18S rRNA pseudouridylation and in cleavage of pre-rRNA. The protein is Ribosome biogenesis protein Nop10 of Methanosphaera stadtmanae (strain ATCC 43021 / DSM 3091 / JCM 11832 / MCB-3).